The sequence spans 211 residues: Claudin-1 (211 aa).

Topologically, residues 1–7 (MANAGLQ) are cytoplasmic. The helical transmembrane segment at 8–28 (LLGFILASLGWIGSIVSTALP) threads the bilayer. Topologically, residues 29 to 81 (QWKIYSYAGDNIVTAQAIYEGLWMSCVSQSTGQIQCKVFDSLLNLNSTLQATR) are extracellular. Cys54 and Cys64 are disulfide-bonded. Residues 82 to 102 (ALMVIGILLGLIAIFVSTIGM) traverse the membrane as a helical segment. Topologically, residues 103-115 (KCMRCLEDDEVQK) are cytoplasmic. The chain crosses the membrane as a helical span at residues 116-136 (MWMAVIGGIIFVISGLATLVA). The Extracellular segment spans residues 137-163 (TAWYGNRIVQEFYDPMTPVNARYEFGQ). A helical transmembrane segment spans residues 164–184 (ALFTGWAAASLCLLGGALLSC). Residues 185–211 (SCPRKTTSYPTPRPYPKPTPSSGKDYV) are Cytoplasmic-facing. The tract at residues 190-211 (TTSYPTPRPYPKPTPSSGKDYV) is disordered. The tract at residues 210–211 (YV) is interactions with TJP1, TJP2, TJP3 and PATJ.

Belongs to the claudin family. Can form homo- and heteropolymers with other CLDN. Homopolymers interact with CLDN3, but not CLDN2, homopolymers. Directly interacts with TJP1/ZO-1, TJP2/ZO-2 and TJP3/ZO-3. Interacts with MPDZ and PATJ. Interacts with OCLN, CD81, CLDN4, CLDN6 and CLDN9. In terms of tissue distribution, detected in epididymis (at protein level). Detected in testis and epididymis.

Its subcellular location is the cell junction. The protein resides in the tight junction. The protein localises to the cell membrane. It is found in the basolateral cell membrane. Functionally, claudins function as major constituents of the tight junction complexes that regulate the permeability of epithelia. While some claudin family members play essential roles in the formation of impermeable barriers, others mediate the permeability to ions and small molecules. Often, several claudin family members are coexpressed and interact with each other, and this determines the overall permeability. CLDN1 is required to prevent the paracellular diffusion of small molecules through tight junctions in the epidermis and is required for the normal barrier function of the skin. Required for normal water homeostasis and to prevent excessive water loss through the skin, probably via an indirect effect on the expression levels of other proteins, since CLDN1 itself seems to be dispensable for water barrier formation in keratinocyte tight junctions. In Rattus norvegicus (Rat), this protein is Claudin-1 (Cldn1).